Reading from the N-terminus, the 186-residue chain is Probable chorismate pyruvate-lyase (186 aa).

Positions 80, 118, and 170 each coordinate substrate.

This sequence belongs to the UbiC family.

It localises to the cytoplasm. It carries out the reaction chorismate = 4-hydroxybenzoate + pyruvate. It participates in cofactor biosynthesis; ubiquinone biosynthesis. Functionally, removes the pyruvyl group from chorismate, with concomitant aromatization of the ring, to provide 4-hydroxybenzoate (4HB) for the ubiquinone pathway. The chain is Probable chorismate pyruvate-lyase from Pseudomonas savastanoi pv. phaseolicola (strain 1448A / Race 6) (Pseudomonas syringae pv. phaseolicola (strain 1448A / Race 6)).